Reading from the N-terminus, the 191-residue chain is Potassium-transporting ATPase KdpC subunit (191 aa).

A helical transmembrane segment spans residues 8–28 (LFLFLLLLLVTGLAYPLLTTV).

Belongs to the KdpC family. In terms of assembly, the system is composed of three essential subunits: KdpA, KdpB and KdpC.

Its subcellular location is the cell inner membrane. Its function is as follows. Part of the high-affinity ATP-driven potassium transport (or Kdp) system, which catalyzes the hydrolysis of ATP coupled with the electrogenic transport of potassium into the cytoplasm. This subunit acts as a catalytic chaperone that increases the ATP-binding affinity of the ATP-hydrolyzing subunit KdpB by the formation of a transient KdpB/KdpC/ATP ternary complex. In Pectobacterium atrosepticum (strain SCRI 1043 / ATCC BAA-672) (Erwinia carotovora subsp. atroseptica), this protein is Potassium-transporting ATPase KdpC subunit.